The primary structure comprises 143 residues: Hemoglobin subunit alpha (143 aa).

Residues 2-143 (TLSDKDKSTV…VALALAERYR (142 aa)) form the Globin domain. Residue histidine 60 participates in O2 binding. Residue histidine 89 participates in heme b binding.

Belongs to the globin family. Heterotetramer of two alpha chains and two beta chains. As to expression, red blood cells.

In terms of biological role, involved in oxygen transport from gills to the various peripheral tissues. The sequence is that of Hemoglobin subunit alpha (hba) from Thunnus thynnus (Atlantic bluefin tuna).